A 262-amino-acid polypeptide reads, in one-letter code: Acyl-[acyl-carrier-protein]--UDP-N-acetylglucosamine O-acyltransferase (262 aa).

It belongs to the transferase hexapeptide repeat family. LpxA subfamily. Homotrimer.

The protein resides in the cytoplasm. The enzyme catalyses a (3R)-hydroxyacyl-[ACP] + UDP-N-acetyl-alpha-D-glucosamine = a UDP-3-O-[(3R)-3-hydroxyacyl]-N-acetyl-alpha-D-glucosamine + holo-[ACP]. The protein operates within glycolipid biosynthesis; lipid IV(A) biosynthesis; lipid IV(A) from (3R)-3-hydroxytetradecanoyl-[acyl-carrier-protein] and UDP-N-acetyl-alpha-D-glucosamine: step 1/6. In terms of biological role, involved in the biosynthesis of lipid A, a phosphorylated glycolipid that anchors the lipopolysaccharide to the outer membrane of the cell. This Pectobacterium carotovorum subsp. carotovorum (strain PC1) protein is Acyl-[acyl-carrier-protein]--UDP-N-acetylglucosamine O-acyltransferase.